Consider the following 169-residue polypeptide: Peptide deformylase (169 aa).

Fe cation is bound by residues C91 and H133. E134 is a catalytic residue. H137 is a binding site for Fe cation.

This sequence belongs to the polypeptide deformylase family. Requires Fe(2+) as cofactor.

It catalyses the reaction N-terminal N-formyl-L-methionyl-[peptide] + H2O = N-terminal L-methionyl-[peptide] + formate. Functionally, removes the formyl group from the N-terminal Met of newly synthesized proteins. Requires at least a dipeptide for an efficient rate of reaction. N-terminal L-methionine is a prerequisite for activity but the enzyme has broad specificity at other positions. The sequence is that of Peptide deformylase from Aliivibrio salmonicida (strain LFI1238) (Vibrio salmonicida (strain LFI1238)).